Reading from the N-terminus, the 97-residue chain is Aspartyl/glutamyl-tRNA(Asn/Gln) amidotransferase subunit C (97 aa).

The protein belongs to the GatC family. As to quaternary structure, heterotrimer of A, B and C subunits.

The catalysed reaction is L-glutamyl-tRNA(Gln) + L-glutamine + ATP + H2O = L-glutaminyl-tRNA(Gln) + L-glutamate + ADP + phosphate + H(+). The enzyme catalyses L-aspartyl-tRNA(Asn) + L-glutamine + ATP + H2O = L-asparaginyl-tRNA(Asn) + L-glutamate + ADP + phosphate + 2 H(+). Functionally, allows the formation of correctly charged Asn-tRNA(Asn) or Gln-tRNA(Gln) through the transamidation of misacylated Asp-tRNA(Asn) or Glu-tRNA(Gln) in organisms which lack either or both of asparaginyl-tRNA or glutaminyl-tRNA synthetases. The reaction takes place in the presence of glutamine and ATP through an activated phospho-Asp-tRNA(Asn) or phospho-Glu-tRNA(Gln). This Picosynechococcus sp. (strain ATCC 27264 / PCC 7002 / PR-6) (Agmenellum quadruplicatum) protein is Aspartyl/glutamyl-tRNA(Asn/Gln) amidotransferase subunit C.